Here is a 497-residue protein sequence, read N- to C-terminus: MLQTKPYTFWFITGSQHLYGEDAIEQVRQHSQTMVEKLNKIGELPYTIELKEVLTTPDAIRKMVIAANSDDDCAGMITWMHTFSPAKMWINGLKQLKKPLLHLHTQFNREIPYDDIDMDFMNLNQSAHGDREYGHIGARLNISRKVIVGHWQNNDVQERLGAWMRTAAAFVDGHHLKVARFGDNMREVAVTEGDKVEAQIQFGWSITAFGIGDLVEKMKAVSEDEVRRLFDEYQELYRLSPSILEQDEVKAAVLEQAKMELALKEFLEEGGYTAFTTNFEDLHGMKQLPGLAVQRLMAEGYGFGGEGDWKTAALLRMMKIIADGKGTSFMEDYTYHLAEGNELVLGSHMLEICPTIAANQPEIQVHPLGIGGKEDPARLVFDGADGPALNASLIDLGHRFRLVVNEVEAIKPERDMPKLPVAKVLWKCKPSLSEATEAWIHAGGAHHTVFSFEVTPEQLYDWATLADIEVVFINDKTDVLQFQQQLQWNEAFRRLFK.

Positions 306, 331, 348, and 447 each coordinate Mn(2+).

It belongs to the arabinose isomerase family. It depends on Mn(2+) as a cofactor.

It carries out the reaction beta-L-arabinopyranose = L-ribulose. It participates in carbohydrate degradation; L-arabinose degradation via L-ribulose; D-xylulose 5-phosphate from L-arabinose (bacterial route): step 1/3. Catalyzes the conversion of L-arabinose to L-ribulose. The protein is L-arabinose isomerase of Halalkalibacterium halodurans (strain ATCC BAA-125 / DSM 18197 / FERM 7344 / JCM 9153 / C-125) (Bacillus halodurans).